A 178-amino-acid polypeptide reads, in one-letter code: Large ribosomal subunit protein uL6 (178 aa).

It belongs to the universal ribosomal protein uL6 family. As to quaternary structure, part of the 50S ribosomal subunit.

Its function is as follows. This protein binds to the 23S rRNA, and is important in its secondary structure. It is located near the subunit interface in the base of the L7/L12 stalk, and near the tRNA binding site of the peptidyltransferase center. The protein is Large ribosomal subunit protein uL6 of Staphylococcus carnosus (strain TM300).